Here is a 123-residue protein sequence, read N- to C-terminus: NADH dehydrogenase [ubiquinone] 1 beta subcomplex subunit 7 (123 aa).

A disordered region spans residues 1-32 (MGTKLSVSLEGASTPETAPRVDRPPTFDPQYG). In terms of domain architecture, CHCH spans 59–102 (RDYCAHHLISLMKCQTQNAPFAGHACDGERGAWDKCEYDDHIMR). 2 short sequence motifs (cx9C motif) span residues 62 to 72 (CAHHLISLMKC) and 84 to 94 (CDGERGAWDKC). Intrachain disulfides connect cysteine 62–cysteine 94 and cysteine 72–cysteine 84.

It belongs to the complex I NDUFB7 subunit family. Complex I is composed of 45 different subunits.

The protein resides in the mitochondrion. The protein localises to the mitochondrion inner membrane. It localises to the mitochondrion intermembrane space. Its function is as follows. Accessory subunit of the mitochondrial membrane respiratory chain NADH dehydrogenase (Complex I), that is believed not to be involved in catalysis. Complex I functions in the transfer of electrons from NADH to the respiratory chain. The immediate electron acceptor for the enzyme is believed to be ubiquinone. This chain is NADH dehydrogenase [ubiquinone] 1 beta subcomplex subunit 7, found in Caenorhabditis elegans.